A 106-amino-acid polypeptide reads, in one-letter code: MDNTDRRRRRKQHKIALHDSEEVSSIEWEFINMTEQEEDLIFRMYRLVGDRWDLIAGRVPGRQPEEIERYWIMRNSEGFADKRRQLHSSSHKHTKPHRPRFSIYPS.

The 38-residue stretch at 34-71 (TEQEEDLIFRMYRLVGDRWDLIAGRVPGRQPEEIERYW) folds into the Myb-like domain. A disordered region spans residues 83 to 106 (RRQLHSSSHKHTKPHRPRFSIYPS). The span at 84–100 (RQLHSSSHKHTKPHRPR) shows a compositional bias: basic residues.

As to quaternary structure, interacts with GL3 and thus prevents GL1 GL3 interaction. Also interacts with BHLH2. In terms of tissue distribution, expressed in roots, leaves, siliques and inflorescences.

The protein resides in the nucleus. Transcription factor. Involved in epidermal cell fate specification. Negative regulator of trichome development, including endoreplication, by lateral inhibition involving intercellular interactions. Promotes the formation of hair developing cells (trichoblasts) in H position in root epidermis, probably by inhibiting non-hair cell (atrichoblasts) formation. The chain is Transcription factor TRY (TRY) from Arabidopsis thaliana (Mouse-ear cress).